A 183-amino-acid polypeptide reads, in one-letter code: Capsid protein (183 aa).

The interval 143–183 (LPETTVVRRRGRSPRRRTPSPRRRRSQSPRRRRSQSRESQC) is disordered. The span at 149–176 (VRRRGRSPRRRTPSPRRRRSQSPRRRRS) shows a compositional bias: basic residues. Residues serine 155, serine 162, and serine 170 each carry the phosphoserine; by host modification. Residues 155–161 (SPRRRTP) form a 1; half-length repeat. The segment at 155–177 (SPRRRTPSPRRRRSQSPRRRRSQ) is 3 X 8 AA repeats of S-P-R-R-R-[PR]-S-Q. The Bipartite nuclear localization signal signature appears at 158 to 175 (RRTPSPRRRRSQSPRRRR). 2 tandem repeats follow at residues 162–169 (SPRRRRSQ) and 170–177 (SPRRRRSQ). Residues 177 to 183 (QSRESQC) form an RNA binding region.

The protein belongs to the orthohepadnavirus core antigen family. As to quaternary structure, homodimerizes, then multimerizes. Interacts with cytosol exposed regions of viral L glycoprotein present in the reticulum-to-Golgi compartment. Interacts with human FLNB. Phosphorylated form interacts with host importin alpha; this interaction depends on the exposure of the NLS, which itself depends upon genome maturation and/or phosphorylation of the capsid protein. Interacts with host NUP153. Post-translationally, phosphorylated by host SRPK1, SRPK2, and maybe protein kinase C or GAPDH. Phosphorylation is critical for pregenomic RNA packaging. Protein kinase C phosphorylation is stimulated by HBx protein and may play a role in transport of the viral genome to the nucleus at the late step during the viral replication cycle.

The protein localises to the virion. It is found in the host cytoplasm. In terms of biological role, self assembles to form an icosahedral capsid. Most capsids appear to be large particles with an icosahedral symmetry of T=4 and consist of 240 copies of capsid protein, though a fraction forms smaller T=3 particles consisting of 180 capsid proteins. Entering capsids are transported along microtubules to the nucleus. Phosphorylation of the capsid is thought to induce exposure of nuclear localization signal in the C-terminal portion of the capsid protein that allows binding to the nuclear pore complex via the importin (karyopherin-) alpha and beta. Capsids are imported in intact form through the nuclear pore into the nuclear basket, where it probably binds NUP153. Only capsids that contain the mature viral genome can release the viral DNA and capsid protein into the nucleoplasm. Immature capsids get stuck in the basket. Capsids encapsulate the pre-genomic RNA and the P protein. Pre-genomic RNA is reverse-transcribed into DNA while the capsid is still in the cytoplasm. The capsid can then either be directed to the nucleus, providing more genomes for transcription, or bud through the endoplasmic reticulum to provide new virions. The protein is Capsid protein of Homo sapiens (Human).